Here is a 368-residue protein sequence, read N- to C-terminus: C-X-C chemokine receptor type 3 (368 aa).

Topologically, residues 1 to 53 are extracellular; sequence MVLEVSDHQVLNDAEVAALLENFSSSYDYGENESDSCCTSPPCPQDFSLNFDR. N22 carries an N-linked (GlcNAc...) asparagine glycan. Y27 and Y29 each carry sulfotyrosine. Residue N32 is glycosylated (N-linked (GlcNAc...) asparagine). Residues 54–80 form a helical membrane-spanning segment; the sequence is AFLPALYSLLFLLGLLGNGAVAAVLLS. The Cytoplasmic segment spans residues 81 to 89; the sequence is RRTALSSTD. A helical membrane pass occupies residues 90–110; sequence TFLLHLAVADTLLVLTLPLWA. At 111–125 the chain is on the extracellular side; sequence VDAAVQWVFGSGLCK. Cysteines 124 and 203 form a disulfide. The helical transmembrane segment at 126-147 threads the bilayer; it reads VAGALFNINFYAGALLLACISF. Residues 148–169 lie on the Cytoplasmic side of the membrane; it reads DRYLNIVHATQLYRRGPPARVT. Residues 170-189 traverse the membrane as a helical segment; sequence LTCLAVWGLCLLFALPDFIF. The Extracellular segment spans residues 190–212; that stretch reads LSAHHDERLNATHCQYNFPQVGR. Residues 213 to 233 traverse the membrane as a helical segment; it reads TALRVLQLVAGFLLPLLVMAY. Topologically, residues 234–255 are cytoplasmic; it reads CYAHILAVLLVSRGQRRLRAMR. The helical transmembrane segment at 256-277 threads the bilayer; that stretch reads LVVVVVVAFALCWTPYHLVVLV. The Extracellular portion of the chain corresponds to 278–298; the sequence is DILMDLGALARNCGRESRVDV. Residues 299–321 traverse the membrane as a helical segment; that stretch reads AKSVTSGLGYMHCCLNPLLYAFV. The Cytoplasmic portion of the chain corresponds to 322-368; sequence GVKFRERMWMLLLRLGCPNQRGLQRQPSSSRRDSSWSETSEASYSGL. Residues 342 to 368 form a disordered region; sequence RGLQRQPSSSRRDSSWSETSEASYSGL. The span at 357 to 368 shows a compositional bias: low complexity; that stretch reads WSETSEASYSGL.

It belongs to the G-protein coupled receptor 1 family. In terms of assembly, homomer. Forms heteromers with ACKR4. As to quaternary structure, interacts with PF4/CXCL4. Sulfation on Tyr-27 and Tyr-29 is essential for CXCL10 binding and subsequent signal transduction induction. Post-translationally, N-glycosylated. Isoform 1 and isoform 2 are mainly expressed in heart, kidney, liver and skeletal muscle. Isoform 1 is also expressed in placenta. Isoform 2 is expressed in endothelial cells. Expressed in T-cells (at protein level).

Its subcellular location is the cell membrane. Receptor for the C-X-C chemokine CXCL9, CXCL10 and CXCL11 and mediates the proliferation, survival and angiogenic activity of human mesangial cells (HMC) through a heterotrimeric G-protein signaling pathway. Binds to CCL21. Probably promotes cell chemotaxis response. Upon activation by PF4, induces activated T-lymphocytes migration mediated via downstream Ras/extracellular signal-regulated kinase (ERK) signaling. Functionally, receptor for the C-X-C chemokine CXCL4 and also mediates the inhibitory activities of CXCL9, CXCL10 and CXCL11 on the proliferation, survival and angiogenic activity of human microvascular endothelial cells (HMVEC) through a cAMP-mediated signaling pathway. Does not promote cell chemotaxis respons. Interaction with CXCL4 or CXCL10 leads to activation of the p38MAPK pathway and contributes to inhibition of angiogenesis. Overexpression in renal cancer cells down-regulates expression of the anti-apoptotic protein HMOX1 and promotes apoptosis. Its function is as follows. Mediates the activity of CXCL11. This Homo sapiens (Human) protein is C-X-C chemokine receptor type 3 (CXCR3).